Consider the following 94-residue polypeptide: PqqA binding protein (94 aa).

Belongs to the PqqD family. Monomer. Interacts with PqqE.

The protein operates within cofactor biosynthesis; pyrroloquinoline quinone biosynthesis. Functionally, functions as a PqqA binding protein and presents PqqA to PqqE, in the pyrroloquinoline quinone (PQQ) biosynthetic pathway. This Acinetobacter baumannii (strain SDF) protein is PqqA binding protein.